We begin with the raw amino-acid sequence, 508 residues long: Maturase K (508 aa).

The protein belongs to the intron maturase 2 family. MatK subfamily.

Its subcellular location is the plastid. The protein resides in the chloroplast. Functionally, usually encoded in the trnK tRNA gene intron. Probably assists in splicing its own and other chloroplast group II introns. The protein is Maturase K of Abies bracteata (Bristle-cone fir).